The chain runs to 2549 residues: Serine/threonine-protein kinase mTOR (2549 aa).

Methionine 1 is modified (N-acetylmethionine). The interaction with NBN stretch occupies residues 1–651 (MLGTGPAVAT…HVVSQTAVQV (651 aa)). HEAT repeat units lie at residues 16-53 (SSNV…MELR), 55-99 (MSQE…VEGG), 100-137 (NSTR…AMAG), 138-179 (DTFT…AISV), 180-220 (PTFF…LILT), 222-276 (QREP…RISS), 277-313 (MEGE…PRHI), 314-364 (TPFT…CCRD), 365-409 (LMEE…AFTD), 410-445 (TQYL…VAVR), 446-494 (SEFK…RAMG), 495-529 (PGIQ…RQIP), 530-563 (QLKK…GLAH), 564-596 (QLAS…EFEG), 597-636 (HSLT…SIHL), 637-683 (ISGH…DERF), 686-724 (HLAQ…MNPA), 727-766 (MPFL…NAPR), 769-811 (RPYM…VSGL), 814-853 (RKWV…STGY), 857-893 (PYRK…LLGA), 894-942 (LDPY…GNLP), 943-988 (LDEF…KCVQ), 989-1027 (FLPQ…KSHI), 1029-1068 (PYMD…GEFK), 1069-1105 (LYLP…LFGA), 1106-1144 (NLDD…RLTE), 1145-1188 (SLDF…GKKY), 1189-1225 (QIFI…LADE), 1226-1273 (EEDP…GAAR), 1274-1311 (RVSK…QAYN), and 1312-1345 (PMAR…ELAL). Serine 567 is modified (phosphoserine). Residue threonine 1162 is modified to Phosphothreonine. Residue lysine 1218 is modified to N6-acetyllysine. Serine 1261 is modified (phosphoserine). 16 TPR repeats span residues 1346-1382 (TSQD…GIVL), 1383-1408 (LGER…QKGP), 1409-1442 (TPAI…HFGE), 1443-1473 (LEIQ…NKED), 1474-1507 (PELM…VNDE), 1508-1541 (TQAK…RDTH), 1542-1574 (DGAF…LDAE), 1575-1614 (LTAM…RREI), 1615-1649 (IRQI…PHED), 1650-1693 (MRTW…PTAH), 1694-1731 (PQVT…AQHA), 1732-1786 (IATE…DRSW), 1787-1846 (YKAW…STEG), 1898-1930 (NNLQ…VKAI), 1931-1970 (QIDT…YHPQ), and 1971-2005 (ALIY…SNTL). The 601-residue stretch at 1382–1982 (LLGERAAKCR…IYPLTVASKS (601 aa)) folds into the FAT domain. The 1D-myo-inositol hexakisphosphate site is built by lysine 1662, lysine 1702, and arginine 1749. Residues 1825 to 1860 (ITNATTAATTAASAAAATSTEGSNSESEAESNENSP) show a composition bias toward low complexity. Residues 1825 to 1867 (ITNATTAATTAASAAAATSTEGSNSESEAESNENSPTPSPLQK) form a disordered region. A sufficient for interaction with the FKBP1A/rapamycin complex region spans residues 2012 to 2144 (VSEELIRVAI…DLELAVPGTY (133 aa)). Lysine 2066 participates in a covalent cross-link: Glycyl lysine isopeptide (Lys-Gly) (interchain with G-Cter in ubiquitin). In terms of domain architecture, PI3K/PI4K catalytic spans 2156–2469 (IAPSLQVITS…GVELGEPAHK (314 aa)). Serine 2159 is modified (phosphoserine; by TBK1). A G-loop region spans residues 2162-2168 (VITSKQR). At threonine 2164 the chain carries Phosphothreonine. Residues serine 2165 and glutamine 2167 each coordinate ATP. Phosphothreonine; by PKB/AKT1 is present on threonine 2173. The ATP site is built by leucine 2185, lysine 2187, glutamate 2190, tyrosine 2225, glycine 2238, tryptophan 2239, valine 2240, and threonine 2245. The interaction with MLST8 stretch occupies residues 2258 to 2296 (KILLNIEHRIMLRMAPDYDHLTLMQKVEVFEHAVNNTAG). The interval 2335-2343 (GLGDRHPSN) is catalytic loop. Asparagine 2343 is a Mg(2+) binding site. 2 residues coordinate ATP: methionine 2345 and isoleucine 2356. An activation loop region spans residues 2355–2380 (HIDFGDCFEVAMTREKFPEKIPFRLT). Aspartate 2357 contacts Mg(2+). Threonine 2446 carries the phosphothreonine; by RPS6KB1 modification. Serine 2448 carries the post-translational modification Phosphoserine; by RPS6KB1. 2 positions are modified to phosphoserine: serine 2478 and serine 2481. The FATC domain maps to 2517-2549 (DTLDVPTQVELLIKQATSHENLCQCYIGWCPFW).

It belongs to the PI3/PI4-kinase family. In terms of assembly, part of the mechanistic target of rapamycin complex 1 (mTORC1) which contains MTOR, MLST8 and RPTOR. The mTORC1 complex is a 1 Md obligate dimer of two stoichiometric heterotetramers with overall dimensions of 290 A x 210 A x 135 A. It has a rhomboid shape and a central cavity, the dimeric interfaces are formed by interlocking interactions between the two MTOR and the two RPTOR subunits. The MLST8 subunit forms distal foot-like protuberances, and contacts only one MTOR within the complex, while the small AKT1S1/PRAS40 localizes to the midsection of the central core, in close proximity to RPTOR. mTORC1 associates with AKT1S1/PRAS40, which inhibits its activity by blocking MTOR substrate-recruitment site. Component of the mechanistic target of rapamycin complex 2 (mTORC2), consisting in two heterotretramers composed of MTOR, MLST8, RICTOR and MAPKAP1/SIN1. Interacts with PLPP7 and PML. Interacts with PRR5 and RICTOR; the interaction is direct within the mTORC2 complex and interaction with RICTOR is enhanced by deubiquitination of RICTOR by USP9X. mTORC1 and mTORC2 associate with DEPTOR, which regulates their activity. Interacts with WAC; WAC positively regulates MTOR activity by promoting the assembly of the TTT complex composed of TELO2, TTI1 and TTI2 and the RUVBL complex composed of RUVBL1 and RUVBL2 into the TTT-RUVBL complex which leads to the dimerization of the mTORC1 complex and its subsequent activation. Interacts with UBQLN1. Interacts with TTI1 and TELO2. Interacts with CLIP1; phosphorylates and regulates CLIP1. Interacts with NBN. Interacts with HTR6. Interacts with BRAT1. Interacts with MEAK7 (via C-terminal domain); the interaction increases upon nutrient stimulation. Interacts with TM4SF5; the interaction is positively regulated by arginine and is negatively regulated by leucine. Interacts with GPR137B. Interacts with NCKAP1L. Interacts with TPCN1 and TPCN2; the interaction is required for TPCN1 and TPCN2 sensitivity to ATP. Interacts with ATP6V1A and with CRYAB, forming a ternary complex. Interacts with SLC38A7; this interaction mediates the recruitment of mTORC1 to the lysosome and its subsequent activation. Interacts with TSPAN8. Post-translationally, autophosphorylates when part of mTORC1 or mTORC2. Phosphorylation at Ser-1261, Ser-2159 and Thr-2164 promotes autophosphorylation. Phosphorylated at Ser-2448 by RPS6KB1. Phosphorylation in the kinase domain modulates the interactions of MTOR with RPTOR and AKT1S1/PRAS40 and leads to increased intrinsic mTORC1 kinase activity. Phosphorylation at Ser-2159 by TBK1 in response to growth factors and pathogen recognition receptors promotes mTORC1 activity. Phosphorylation at Ser-2159 by TBK1 in response to EGF growth factor promotes mTORC2 activity, leading to AKT1 phosphorylation and activation. Phosphorylation at Thr-2173 in the ATP-binding region by AKT1 strongly reduces kinase activity. Ubiquitinated at Lys-2066 by the SCF(FBXO22) complex via 'Lys-27'-linked ubiquitination prevents mTORC1 substrate recruitment.

The protein resides in the lysosome membrane. The protein localises to the endoplasmic reticulum membrane. Its subcellular location is the golgi apparatus membrane. It is found in the cell membrane. It localises to the mitochondrion outer membrane. The protein resides in the cytoplasm. The protein localises to the nucleus. Its subcellular location is the PML body. It is found in the microsome membrane. It localises to the cytoplasmic vesicle. The protein resides in the phagosome. The enzyme catalyses L-seryl-[protein] + ATP = O-phospho-L-seryl-[protein] + ADP + H(+). The catalysed reaction is L-threonyl-[protein] + ATP = O-phospho-L-threonyl-[protein] + ADP + H(+). It catalyses the reaction L-tyrosyl-[protein] + ATP = O-phospho-L-tyrosyl-[protein] + ADP + H(+). Its activity is regulated as follows. The mTORC1 complex is activated in response to nutrients, growth factors or amino acids: activation requires relocalization of the mTORC1 complex to lysosomes that is mediated by the Ragulator complex, SLC38A9, and the Rag GTPases RagA/RRAGA, RagB/RRAGB, RagC/RRAGC and RagD/RRAGD. Activation of mTORC1 by growth factors such as insulin involves AKT1-mediated phosphorylation of TSC1-TSC2, which leads to the activation of the RHEB GTPase a potent activator of the protein kinase activity of mTORC1. Insulin-stimulated and amino acid-dependent phosphorylation at Ser-1261 promotes autophosphorylation and the activation of mTORC1. On the other hand, low cellular energy levels can inhibit mTORC1 through activation of PRKAA1 while hypoxia inhibits mTORC1 through a REDD1-dependent mechanism which may also require PRKAA1. The kinase activity of MTOR within the mTORC1 complex is positively regulated by MLST8. The kinase activity of MTOR is inhibited by DEPTOR and AKT1S1. The non-canonical mTORC1 complex is independent of the RHEB GTPase and specifically mediates phosphorylation of MiT/TFE factors TFEB and TFE3 but not other mTORC1 substrates: it is activated by FLCN, which activates Rag GTPases RagC/RRAGC and RagD/RRAGD. MTOR is the target of the immunosuppressive and anti-cancer drug rapamycin which acts in complex with FKBP1A/FKBP12, and specifically inhibits its kinase activity. mTORC2 is also activated by growth factors, but seems to be nutrient-insensitive. mTORC2 associates and is directly activated by ribosomes. mTORC2 may also be regulated by RHEB but in an indirect manner through the PI3K signaling pathway. In terms of biological role, serine/threonine protein kinase which is a central regulator of cellular metabolism, growth and survival in response to hormones, growth factors, nutrients, energy and stress signals. MTOR directly or indirectly regulates the phosphorylation of at least 800 proteins. Functions as part of 2 structurally and functionally distinct signaling complexes mTORC1 and mTORC2 (mTOR complex 1 and 2). In response to nutrients, growth factors or amino acids, mTORC1 is recruited to the lysosome membrane and promotes protein, lipid and nucleotide synthesis by phosphorylating key regulators of mRNA translation and ribosome synthesis. This includes phosphorylation of EIF4EBP1 and release of its inhibition toward the elongation initiation factor 4E (eiF4E). Moreover, phosphorylates and activates RPS6KB1 and RPS6KB2 that promote protein synthesis by modulating the activity of their downstream targets including ribosomal protein S6, eukaryotic translation initiation factor EIF4B, and the inhibitor of translation initiation PDCD4. Stimulates the pyrimidine biosynthesis pathway, both by acute regulation through RPS6KB1-mediated phosphorylation of the biosynthetic enzyme CAD, and delayed regulation, through transcriptional enhancement of the pentose phosphate pathway which produces 5-phosphoribosyl-1-pyrophosphate (PRPP), an allosteric activator of CAD at a later step in synthesis, this function is dependent on the mTORC1 complex. Regulates ribosome synthesis by activating RNA polymerase III-dependent transcription through phosphorylation and inhibition of MAF1 an RNA polymerase III-repressor. Activates dormant ribosomes by mediating phosphorylation of SERBP1, leading to SERBP1 inactivation and reactivation of translation. In parallel to protein synthesis, also regulates lipid synthesis through SREBF1/SREBP1 and LPIN1. To maintain energy homeostasis mTORC1 may also regulate mitochondrial biogenesis through regulation of PPARGC1A. In the same time, mTORC1 inhibits catabolic pathways: negatively regulates autophagy through phosphorylation of ULK1. Under nutrient sufficiency, phosphorylates ULK1 at 'Ser-758', disrupting the interaction with AMPK and preventing activation of ULK1. Also prevents autophagy through phosphorylation of the autophagy inhibitor DAP. Also prevents autophagy by phosphorylating RUBCNL/Pacer under nutrient-rich conditions. Prevents autophagy by mediating phosphorylation of AMBRA1, thereby inhibiting AMBRA1 ability to mediate ubiquitination of ULK1 and interaction between AMBRA1 and PPP2CA. mTORC1 exerts a feedback control on upstream growth factor signaling that includes phosphorylation and activation of GRB10 a INSR-dependent signaling suppressor. Among other potential targets mTORC1 may phosphorylate CLIP1 and regulate microtubules. The mTORC1 complex is inhibited in response to starvation and amino acid depletion. The non-canonical mTORC1 complex, which acts independently of RHEB, specifically mediates phosphorylation of MiT/TFE factors TFEB and TFE3 in the presence of nutrients, promoting their cytosolic retention and inactivation. Upon starvation or lysosomal stress, inhibition of mTORC1 induces dephosphorylation and nuclear translocation of TFEB and TFE3, promoting their transcription factor activity. The mTORC1 complex regulates pyroptosis in macrophages by promoting GSDMD oligomerization. MTOR phosphorylates RPTOR which in turn inhibits mTORC1. As part of the mTORC2 complex, MTOR transduces signals from growth factors to pathways involved in proliferation, cytoskeletal organization, lipogenesis and anabolic output. In response to growth factors, mTORC2 phosphorylates and activates AGC protein kinase family members, including AKT (AKT1, AKT2 and AKT3), PKC (PRKCA, PRKCB and PRKCE) and SGK1. In contrast to mTORC1, mTORC2 is nutrient-insensitive. mTORC2 plays a critical role in AKT1 activation by mediating phosphorylation of different sites depending on the context, such as 'Thr-450', 'Ser-473', 'Ser-477' or 'Thr-479', facilitating the phosphorylation of the activation loop of AKT1 on 'Thr-308' by PDPK1/PDK1 which is a prerequisite for full activation. mTORC2 also regulates the phosphorylation of SGK1 at 'Ser-422'. mTORC2 may regulate the actin cytoskeleton, through phosphorylation of PRKCA, PXN and activation of the Rho-type guanine nucleotide exchange factors RHOA and RAC1A or RAC1B. The mTORC2 complex also phosphorylates various proteins involved in insulin signaling, such as FBXW8 and IGF2BP1. May also regulate insulin signaling by acting as a tyrosine protein kinase that catalyzes phosphorylation of IGF1R and INSR. Regulates osteoclastogenesis by adjusting the expression of CEBPB isoforms. Plays an important regulatory role in the circadian clock function; regulates period length and rhythm amplitude of the suprachiasmatic nucleus (SCN) and liver clocks. The chain is Serine/threonine-protein kinase mTOR from Mus musculus (Mouse).